The chain runs to 139 residues: MWKEFREFAMKGNVVDLAVGVIIGAAFGGIVSSMVADIIMPIVGAVTGGLDFSNYFLPLSESVNASNLSDAKKQGAVLAWGNFLTLTLNFLIVAFVLFMVIKGMNRLKRKDEAASAEPPKPTREEELLTEIRDLLKAKV.

The next 3 membrane-spanning stretches (helical) occupy residues 19-39 (VGVI…ADII), 40-60 (MPIV…LPLS), and 81-101 (GNFL…FMVI).

This sequence belongs to the MscL family. Homopentamer.

Its subcellular location is the cell inner membrane. Its function is as follows. Channel that opens in response to stretch forces in the membrane lipid bilayer. May participate in the regulation of osmotic pressure changes within the cell. In Nitrobacter winogradskyi (strain ATCC 25391 / DSM 10237 / CIP 104748 / NCIMB 11846 / Nb-255), this protein is Large-conductance mechanosensitive channel.